We begin with the raw amino-acid sequence, 537 residues long: ATP synthase subunit alpha (537 aa).

174–181 (GDRQTGKT) provides a ligand contact to ATP.

It belongs to the ATPase alpha/beta chains family. F-type ATPases have 2 components, CF(1) - the catalytic core - and CF(0) - the membrane proton channel. CF(1) has five subunits: alpha(3), beta(3), gamma(1), delta(1), epsilon(1). CF(0) has three main subunits: a(1), b(2) and c(9-12). The alpha and beta chains form an alternating ring which encloses part of the gamma chain. CF(1) is attached to CF(0) by a central stalk formed by the gamma and epsilon chains, while a peripheral stalk is formed by the delta and b chains.

It localises to the cell inner membrane. The enzyme catalyses ATP + H2O + 4 H(+)(in) = ADP + phosphate + 5 H(+)(out). Produces ATP from ADP in the presence of a proton gradient across the membrane. The alpha chain is a regulatory subunit. This Verminephrobacter eiseniae (strain EF01-2) protein is ATP synthase subunit alpha.